We begin with the raw amino-acid sequence, 74 residues long: Antimicrobial peptide HsAp4 (74 aa).

The N-terminal stretch at 1 to 21 (MSRRRILILVLVTMLVKTMAG) is a signal peptide. Positions 22-33 (MESKWVETTYEI) are excised as a propeptide. R65 is subject to Arginine amide. A propeptide spanning residues 69 to 74 (AISEQT) is cleaved from the precursor.

It belongs to the non-disulfide-bridged peptide (NDBP) superfamily. Medium-length antimicrobial peptide (group 3) family. As to expression, expressed by the venom gland.

The protein localises to the secreted. It localises to the target cell membrane. Possesses antimicrobial activity against both Gram-negative and Gram-positive bacteria, as well as against the fungus C.tropicalis. Also possesses a relatively high hemolytic activity. May act by disrupting the integrity of the bacterial cell membrane. The chain is Antimicrobial peptide HsAp4 from Heterometrus spinifer (Asia giant forest scorpion).